We begin with the raw amino-acid sequence, 496 residues long: Nucleolar and spindle-associated protein 1-B (496 aa).

3 disordered regions span residues 44-206 (YPES…HEAH), 250-294 (TPVS…STAN), and 338-496 (KSSS…VPVK). Positions 56-69 (GCTSLTDTDELNSS) are enriched in polar residues. Residues 121–134 (TQDKDCLESKKKEV) are compositionally biased toward basic and acidic residues. Residues 150-159 (QDTSKQNNSE) show a composition bias toward polar residues. The segment covering 261-281 (SRLSLLSPLPRTTGASPSRTP) has biased composition (low complexity). Polar residues-rich tracts occupy residues 376–396 (NTTI…NKAN) and 403–423 (AQNT…QASL). Residues 447–459 (SGSNSNVSVLKNN) are compositionally biased toward low complexity. The segment covering 467–485 (TREERRKQHELDRKGKRDQ) has biased composition (basic and acidic residues).

This sequence belongs to the NUSAP family. As to quaternary structure, interacts with DNA, microtubules, ipo7, kpna2 and kpnb1. Microtubule stabilization is inhibited by ipo7 and kpna2, while microtubule bundling is inhibited by kpnb1. Active GTP-bound ran causes dissociation of ipo7 and kpnb1.

The protein localises to the cytoplasm. The protein resides in the nucleus. It localises to the cytoskeleton. Its subcellular location is the spindle. Functionally, microtubule-associated protein with the capacity to bundle and stabilize microtubules. May associate with chromosomes and promote the organization of meiotic or mitotic spindle microtubules around them. The polypeptide is Nucleolar and spindle-associated protein 1-B (nusap1-b) (Xenopus laevis (African clawed frog)).